The sequence spans 480 residues: REST corepressor 1 (480 aa).

Residues 1 to 105 (MPAMVEKGPE…GGGMRVGPQY (105 aa)) form a disordered region. Low complexity-rich tracts occupy residues 21-58 (AASAASAAASAASAAASAAASAGTASASAAAAASAAAA) and 66-89 (SLAAAAPNGNSGSNSWEEGSSGSS). The segment at 72–251 (PNGNSGSNSW…RHARKQKRER (180 aa)) is interaction with HDAC1. The ELM2 domain maps to 97–183 (GGMRVGPQYQ…KSLADLPNFT (87 aa)). A Glycyl lysine isopeptide (Lys-Gly) (interchain with G-Cter in SUMO2) cross-link involves residue K116. At S121 the chain carries Phosphoserine. Residues 184–235 (PFPDEWTVEDKVLFEQAFSFHGKTFHRIQQMLPDKSIASLVKFYYSWKKTRT) enclose the SANT 1 domain. Residues 238–265 (SVMDRHARKQKREREESEDELEETNGSN) adopt a coiled-coil conformation. The tract at residues 238–308 (SVMDRHARKQ…AKNRAKRKPP (71 aa)) is disordered. Position 254 is a phosphoserine (S254). Positions 272-282 (DPNKESKKEVP) are enriched in basic and acidic residues. An interaction with KDM1A region spans residues 290-378 (VKKEKHSTQA…LPEVIQKCNA (89 aa)). A Glycyl lysine isopeptide (Lys-Gly) (interchain with G-Cter in SUMO2) cross-link involves residue K291. The stretch at 328-363 (ATTVLRQLDMELVSIKRQIQNIKQTNSALKEKLDGG) forms a coiled coil. In terms of domain architecture, SANT 2 spans 375 to 426 (KCNARWTTEEQLLAVQAIRKYGRDFQAISDVIGNKSVVQVKNFFVNYRRRFN). Residues 436–466 (AEHGKDETNGPANQKPVKSPESSIKIPEEED) form a disordered region. Position 454 is a phosphoserine (S454). K460 is covalently cross-linked (Glycyl lysine isopeptide (Lys-Gly) (interchain with G-Cter in SUMO2)).

The protein belongs to the CoREST family. As to quaternary structure, component of a BHC histone deacetylase complex that contains HDAC1, HDAC2, HMG20B/BRAF35, KDM1A, RCOR1/CoREST and PHF21A/BHC80. The BHC complex may also contain ZMYM2, ZNF217, ZMYM3, GSE1 and GTF2I. Interacts with REST. Interacts with the SMARCE1/BAF57, suggesting that the BHC complex may recruit the ATP-dependent chromatin-remodeling SWI-SNF complex. Interacts directly with GFI1 and GFI1B in a RCOR/GFI/KDM1A/HDAC complex. Interacts with INMS1. Interacts with SOX2. In terms of tissue distribution, expressed in the external germinal layer (EGL) and internal granular layer (IGL) of the cerebellum and in Purkinje cells (at protein level).

The protein resides in the nucleus. In terms of biological role, essential component of the BHC complex, a corepressor complex that represses transcription of neuron-specific genes in non-neuronal cells. The BHC complex is recruited at RE1/NRSE sites by REST and acts by deacetylating and demethylating specific sites on histones, thereby acting as a chromatin modifier. In the BHC complex, it serves as a molecular beacon for the recruitment of molecular machinery, including MeCP2 and SUV39H1, that imposes silencing across a chromosomal interval. Plays a central role in demethylation of Lys-4 of histone H3 by promoting demethylase activity of KDM1A on core histones and nucleosomal substrates. It also protects KDM1A from the proteasome. Component of a RCOR/GFI/KDM1A/HDAC complex that suppresses, via histone deacetylase (HDAC) recruitment, a number of genes implicated in multilineage blood cell development and controls hematopoietic differentiation. In Mus musculus (Mouse), this protein is REST corepressor 1 (Rcor1).